Here is a 164-residue protein sequence, read N- to C-terminus: SsrA-binding protein (164 aa).

This sequence belongs to the SmpB family.

The protein resides in the cytoplasm. Its function is as follows. Required for rescue of stalled ribosomes mediated by trans-translation. Binds to transfer-messenger RNA (tmRNA), required for stable association of tmRNA with ribosomes. tmRNA and SmpB together mimic tRNA shape, replacing the anticodon stem-loop with SmpB. tmRNA is encoded by the ssrA gene; the 2 termini fold to resemble tRNA(Ala) and it encodes a 'tag peptide', a short internal open reading frame. During trans-translation Ala-aminoacylated tmRNA acts like a tRNA, entering the A-site of stalled ribosomes, displacing the stalled mRNA. The ribosome then switches to translate the ORF on the tmRNA; the nascent peptide is terminated with the 'tag peptide' encoded by the tmRNA and targeted for degradation. The ribosome is freed to recommence translation, which seems to be the essential function of trans-translation. The protein is SsrA-binding protein of Synechococcus sp. (strain CC9311).